The chain runs to 218 residues: Large ribosomal subunit protein uL3 (218 aa).

Residues 134–154 form a disordered region; that stretch reads GRASHGNSRSHNVPGSIGMAQ. Q154 bears the N5-methylglutamine mark.

The protein belongs to the universal ribosomal protein uL3 family. In terms of assembly, part of the 50S ribosomal subunit. Forms a cluster with proteins L14 and L19. Methylated by PrmB.

Its function is as follows. One of the primary rRNA binding proteins, it binds directly near the 3'-end of the 23S rRNA, where it nucleates assembly of the 50S subunit. This Polynucleobacter necessarius subsp. necessarius (strain STIR1) protein is Large ribosomal subunit protein uL3.